A 329-amino-acid chain; its full sequence is Cytoplasmic phosphatidylinositol transfer protein 1 (329 aa).

A disordered region spans residues 267-329; that stretch reads SHGGYSSAPS…GNKPSLAKPE (63 aa).

The protein belongs to the PtdIns transfer protein family. PI transfer class IIB subfamily.

Its subcellular location is the cytoplasm. The catalysed reaction is a 1,2-diacyl-sn-glycero-3-phospho-(1D-myo-inositol)(in) = a 1,2-diacyl-sn-glycero-3-phospho-(1D-myo-inositol)(out). It catalyses the reaction a 1,2-diacyl-sn-glycero-3-phosphate(in) = a 1,2-diacyl-sn-glycero-3-phosphate(out). Functionally, catalyzes the transfer of phosphatidylinositol (PI) and phosphatidic acid (PA) between membranes. Binds PA derived from the phospholipase D signaling pathway and among the cellular PA species, preferably binds to the C16:0/16:1 and C16:1/18:1 PA species. The chain is Cytoplasmic phosphatidylinositol transfer protein 1 (pitpnc1) from Xenopus tropicalis (Western clawed frog).